The following is a 457-amino-acid chain: Zinc finger protein ZIPIC (457 aa).

The 82-residue stretch at 3–84 folds into the ZAD domain; it reads CCICQFSVRV…ILELIHSPYM (82 aa). 6 C2H2-type zinc fingers span residues 257–280, 284–306, 312–334, 340–362, 369–391, and 397–419; these read IQCP…KREH, YVCD…LQNH, FACP…MAWH, YQCD…KMIH, LECQ…MRSH, and FACP…LREH. The C2H2-type 7; degenerate zinc finger occupies 430–448; it reads FHCSKCTHTFINEQNYDAH.

Interacts (via region between the ZAD domain and the first zinc finger domain) with Cp190 (via centrosomal targeting M domain); the interaction is direct. Interacts with pita.

It is found in the nucleus. The protein resides in the chromosome. Its function is as follows. Insulator DNA-binding protein. Recruits Cp190 and cooperatively binds to chromatin promoter regions to exert transcriptional regulator and chromatin insulator functions. Chromatin insulators are regulatory elements that establish independent domains of transcriptional activity within eukaryotic genomes. Insulators are proposed to structure the chromatin fiber into independent domains of differing transcriptional potential by promoting the formation of distinct chromatin loops to form topologically associating domains (TADs). Chromatin binding sites often cluster with those of other insulator DNA-binding proteins such as pita, CTCF and BEAF-32, but not Su(Hw). In Drosophila melanogaster (Fruit fly), this protein is Zinc finger protein ZIPIC.